The primary structure comprises 438 residues: Chromosomal replication initiator protein DnaA (438 aa).

The tract at residues 1-71 is domain I, interacts with DnaA modulators; that stretch reads MTTKEFLTII…CFEIYDGSKP (71 aa). The segment at 71-100 is domain II; the sequence is PTIEIKLSNEKKSKKEILKEQTQNESTEST. A domain III, AAA+ region region spans residues 101-315; that stretch reads ILNPSYTFDS…GVLIRINASA (215 aa). Residues G145, G147, K148, and T149 each contribute to the ATP site. Residues 316 to 438 form a domain IV, binds dsDNA region; that stretch reads SLLNQEITLP…LKNKIINSRE (123 aa).

The protein belongs to the DnaA family. In terms of assembly, oligomerizes as a right-handed, spiral filament on DNA at oriC.

The protein localises to the cytoplasm. In terms of biological role, plays an essential role in the initiation and regulation of chromosomal replication. ATP-DnaA binds to the origin of replication (oriC) to initiate formation of the DNA replication initiation complex once per cell cycle. Binds the DnaA box (a 9 base pair repeat at the origin) and separates the double-stranded (ds)DNA. Forms a right-handed helical filament on oriC DNA; dsDNA binds to the exterior of the filament while single-stranded (ss)DNA is stabiized in the filament's interior. The ATP-DnaA-oriC complex binds and stabilizes one strand of the AT-rich DNA unwinding element (DUE), permitting loading of DNA polymerase. After initiation quickly degrades to an ADP-DnaA complex that is not apt for DNA replication. Binds acidic phospholipids. This is Chromosomal replication initiator protein DnaA from Aliarcobacter butzleri (strain RM4018) (Arcobacter butzleri).